The following is a 282-amino-acid chain: MGYLSSVIPTDGSPVSGGGLSQNGKFSYGYASSPGKRASMEDFYETRIDSVDGQIIGLFGVFDGHGGAKVAEYVKQNLFSHLLRHPKFISDTKVAIDDAYKSTDSEFLESDSSQNQCGSTASTAVLVGDRLFVANVGDSRAIICRGGNAIAVSKDHKPDQTDERQRIEDAGGFVMWAGTWRVGGVLAVSRAFGDKLLKQYVVVDPEIREEVIDHSLEFLILASDGLWDVVTNEEAVDMTRSIHDPEEAAKKLLQEAYKRESSDNITCVVVRFLHGQGSSGYA.

The PPM-type phosphatase domain maps to 27 to 272 (SYGYASSPGK…DNITCVVVRF (246 aa)). Positions 63, 64, 224, and 263 each coordinate Mn(2+).

This sequence belongs to the PP2C family. Requires Mg(2+) as cofactor. Mn(2+) is required as a cofactor.

It carries out the reaction O-phospho-L-seryl-[protein] + H2O = L-seryl-[protein] + phosphate. The catalysed reaction is O-phospho-L-threonyl-[protein] + H2O = L-threonyl-[protein] + phosphate. The chain is Probable protein phosphatase 2C 45 from Oryza sativa subsp. japonica (Rice).